The following is a 244-amino-acid chain: 5'-nucleotidase SurE (244 aa).

Positions 8, 9, 39, and 96 each coordinate a divalent metal cation.

The protein belongs to the SurE nucleotidase family. Requires a divalent metal cation as cofactor.

It localises to the cytoplasm. It catalyses the reaction a ribonucleoside 5'-phosphate + H2O = a ribonucleoside + phosphate. In terms of biological role, nucleotidase that shows phosphatase activity on nucleoside 5'-monophosphates. This chain is 5'-nucleotidase SurE, found in Thermus thermophilus (strain ATCC 27634 / DSM 579 / HB8).